The following is a 4001-amino-acid chain: Ankyrin repeat and KH domain-containing protein mask (4001 aa).

Residues 1–14 (MNNDAKNHESDDLN) are compositionally biased toward basic and acidic residues. Disordered stretches follow at residues 1–61 (MNND…NRQL), 91–174 (KNEP…GGGS), and 391–494 (DTDT…FLLD). Residues 15–30 (VRSTAYFNQQTTTNQP) are compositionally biased toward polar residues. A compositionally biased stretch (low complexity) spans 38-61 (NNTGSGSGSNNNNNNTNQNPNRQL). A compositionally biased stretch (polar residues) spans 94–117 (PLTTTESSGVLTNTPLPSNSRLKV). The segment covering 118–159 (NNNNNTNNTAKMSGTSSSQSSATPTPPTASSSTTTTTTTNIS) has biased composition (low complexity). Gly residues predominate over residues 160–174 (TGGGGSGSSGGGGGS). Composition is skewed to acidic residues over residues 408-425 (SESE…ESDP) and 434-486 (VRED…EDAP). The residue at position 501 (Ser501) is a Phosphoserine. 15 ANK repeats span residues 546 to 575 (SGFS…NVNL), 584 to 614 (DGES…QVED), 618 to 647 (KDST…DVNA), 651 to 680 (TGNT…NVEE), 684 to 713 (NGHT…GINT), 718 to 747 (FKES…DQEH), 751 to 780 (EMHT…QVNM), 784 to 813 (SFES…NIEE), 817 to 846 (EGYT…NINA), 851 to 880 (TQET…NLEL), 881 to 910 (GAST…NVHA), 914 to 943 (TGDT…ELEH), 947 to 976 (GGRT…NVNK), 981 to 1011 (NDHT…PFHK), and 1014 to 1043 (DNST…ISPT). Disordered regions lie at residues 1046–1067 (AASA…NQMR) and 1306–1376 (QPGE…PTAL). Polar residues predominate over residues 1367–1376 (DNNQPVPTAL). Phosphoserine is present on residues Ser1389 and Ser1588. Disordered stretches follow at residues 1583 to 1612 (GDQP…RLGS), 1646 to 1669 (SDLE…ENTL), 1682 to 1779 (EDGI…SLPL), 1852 to 1872 (VVHQ…DGSA), 2084 to 2108 (MAQH…QQLH), and 2225 to 2256 (TPAP…KERR). 3 stretches are compositionally biased toward acidic residues: residues 1646–1657 (SDLESECEDDAE), 1685–1704 (IIVE…EEQD), and 1716–1759 (DDED…EPDS). Residues 1760–1776 (DQGTGNNNNNSKSGASS) show a composition bias toward low complexity. Low complexity predominate over residues 2084-2093 (MAQHQAQQQQ). Polar residues predominate over residues 2228–2237 (PSSGVSSTKS). ANK repeat units follow at residues 2312-2341 (NHDT…NIEH), 2345-2374 (KGFT…ELEA), 2379-2408 (TKDT…NKEH), 2412-2441 (SDYT…EINS), 2447-2476 (LGIS…DINA), 2481-2510 (NRNT…NVEH), 2514-2543 (TGLT…DVNA), 2549-2578 (SRDT…SVEV), 2582-2611 (KGNS…DIDS), and 2615-2644 (RRVS…QFPS). Residues 2674-2732 (AKEAQAVKANKNASILLEELDLERTREESRKAAAARRRERKKKKKMEKKEEKRRQQQGN) adopt a coiled-coil conformation. Ser2687 bears the Phosphoserine mark. A Phosphothreonine modification is found at Thr2698. Residues 2699–3033 (REESRKAAAA…TSTTTAASSV (335 aa)) are disordered. Basic residues predominate over residues 2706 to 2719 (AAARRRERKKKKKM). The span at 2739–2762 (MQGDDDDASDKDDDSDKDDEDEEA) shows a compositional bias: acidic residues. 2 positions are modified to phosphoserine: Ser2747 and Ser2753. Positions 2793–2810 (SQSAQAAEAAANSVSTNS) are enriched in low complexity. The span at 2828-2839 (EPTQPVITSNSV) shows a compositional bias: polar residues. The segment covering 2868–2886 (RQLDVKKEEPALKKKEEKN) has biased composition (basic and acidic residues). Residues 2906 to 2941 (ALPAKQQPSSSSKLQSSESASNINSSTATNTSSANT) show a composition bias toward low complexity. Polar residues predominate over residues 2950–2960 (ASQTASATTLN). The span at 2963 to 2975 (KRTEVDGWKEVVR) shows a compositional bias: basic and acidic residues. A compositionally biased stretch (polar residues) spans 2995 to 3004 (TATSSATSVQ). The segment covering 3012 to 3032 (ANSSSNSSSSLTTSTTTAASS) has biased composition (low complexity). The region spanning 3036 to 3100 (MTCKKVQVPV…DATKQAHMLI (65 aa)) is the KH domain. 3 stretches are compositionally biased toward low complexity: residues 3156–3178 (ASTT…ASYS), 3195–3227 (SGRS…AGSS), and 3244–3257 (NGVI…SSKS). 4 disordered regions span residues 3156–3329 (ASTT…GQGG), 3383–3457 (KPIA…QTSQ), 3520–3636 (AVGD…PPTA), and 3744–3786 (IFPQ…GGAA). Polar residues predominate over residues 3262 to 3278 (QKSSTTLGKSSTVSPGA). Residues 3396–3416 (GSPTQVQQQHQTQQQQQQQLP) show a composition bias toward low complexity. Residues 3417–3427 (QPAPVPGPQPQ) show a composition bias toward pro residues. Residues 3428-3457 (QQPLQQQQQQQAPQQQPQQPNQQQQPQTSQ) show a composition bias toward low complexity. Residues 3539 to 3559 (NILSSPVGSSKASSNHSTSPP) are compositionally biased toward polar residues. Over residues 3565–3577 (QQQQQQQPQSSQQ) the composition is skewed to low complexity. Ser3596 is modified (phosphoserine). Positions 3774–3786 (PPGTGARQPGGAA) are enriched in low complexity. 3 positions are modified to phosphoserine: Ser3820, Ser3822, and Ser3825. The interval 3876 to 3945 (KAQPPGLQQP…HNMQAPPNMS (70 aa)) is disordered. Over residues 3891 to 3910 (SQQQQQQPLNWLKQQPQQQQ) the composition is skewed to low complexity.

In terms of assembly, may interact with Unc-89 (via protein kinase domain 1 or 2). Expressed ubiquitously in eye imaginal disk, slightly higher expression is seen in presumptive photoreceptors. Expressed in indirect flight muscle (IFM) (at protein level).

Its subcellular location is the cytoplasm. It localises to the myofibril. It is found in the sarcomere. The protein resides in the z line. The protein localises to the m line. In terms of biological role, mediator of receptor tyrosine kinase (RTK) signaling, and may act either downstream of MAPK or transduce signaling through a parallel branch of the RTK pathway. Required for the development and organization of indirect flight muscle sarcomeres by regulating the formation of M line and H zone and the correct assembly of thick and thin filaments in the sarcomere. The chain is Ankyrin repeat and KH domain-containing protein mask from Drosophila melanogaster (Fruit fly).